A 382-amino-acid chain; its full sequence is Chaperone protein DnaJ (382 aa).

One can recognise a J domain in the interval 5–70; sequence DYYDLLGLSK…DKRAAYDRYG (66 aa). The CR-type zinc finger occupies 138 to 216; that stretch reads GTKVPINYVT…CSGSGRVRDE (79 aa). The Zn(2+) site is built by cysteine 151, cysteine 154, cysteine 168, cysteine 171, cysteine 190, cysteine 193, cysteine 204, and cysteine 207. 4 CXXCXGXG motif repeats span residues 151-158, 168-175, 190-197, and 204-211; these read CSSCSGSG, CNTCHGAG, CHVCNGEG, and CKKCSGSG.

The protein belongs to the DnaJ family. Homodimer. The cofactor is Zn(2+).

Its subcellular location is the cytoplasm. Participates actively in the response to hyperosmotic and heat shock by preventing the aggregation of stress-denatured proteins and by disaggregating proteins, also in an autonomous, DnaK-independent fashion. Unfolded proteins bind initially to DnaJ; upon interaction with the DnaJ-bound protein, DnaK hydrolyzes its bound ATP, resulting in the formation of a stable complex. GrpE releases ADP from DnaK; ATP binding to DnaK triggers the release of the substrate protein, thus completing the reaction cycle. Several rounds of ATP-dependent interactions between DnaJ, DnaK and GrpE are required for fully efficient folding. Also involved, together with DnaK and GrpE, in the DNA replication of plasmids through activation of initiation proteins. The chain is Chaperone protein DnaJ from Ehrlichia ruminantium (strain Welgevonden).